The sequence spans 116 residues: Beta-2-microglobulin (116 aa).

The N-terminal stretch at 1–19 is a signal peptide; it reads MRAIITFALFCVLYITVQA. Residues 24 to 111 form the Ig-like C1-type domain; that stretch reads PKVQVYSHFP…RHMSNTNAYS (88 aa). Cys44 and Cys99 are disulfide-bonded.

Belongs to the beta-2-microglobulin family. Heterodimer of an alpha chain and a beta chain. Beta-2-microglobulin is the beta-chain of major histocompatibility complex class I molecules.

The protein resides in the secreted. Component of the class I major histocompatibility complex (MHC). Involved in the presentation of peptide antigens to the immune system. The sequence is that of Beta-2-microglobulin (b2m) from Labeobarbus intermedius (Lake tana barbels).